A 362-amino-acid chain; its full sequence is Very-long-chain (3R)-3-hydroxyacyl-CoA dehydratase (362 aa).

Over 1–149 (MADCSLRPHV…DPFKHLKKGY (149 aa)) the chain is Cytoplasmic. Positions 5–94 (SLRPHVHWAQ…KESSWWERLT (90 aa)) constitute a CS domain. Residues 111 to 135 (LDESDAEMELKEKEEEKINKMKIES) are a coiled coil. A helical membrane pass occupies residues 150–170 (LIMYNLVQFLGFSWIFVNMTV). The Lumenal portion of the chain corresponds to 171–189 (RLFILGKDSFYDTFHTIAD). A helical transmembrane segment spans residues 190–210 (MMYFCQTLALMEILNSLIGLV). At 211-212 (RS) the chain is on the cytoplasmic side. The chain crosses the membrane as a helical span at residues 213–233 (PLIPAVIQVFGRNFILFVVLG). Over 234–242 (SLEEMQSKA) the chain is Lumenal. A helical membrane pass occupies residues 243–263 (VVFFLFYFWSIIELFRYPYYM). At 264–282 (LSCMGIEWKPLTWLRYTSW) the chain is on the cytoplasmic side. A helical transmembrane segment spans residues 283–303 (IPLYPLGGLAEAVCLIQSIPI). Active-site residues include Tyr286 and Glu293. Residues 304–319 (FSETGKFSLGLPNPLN) are Lumenal-facing. Residues 320–340 (VTIQFSFLLQMYLIALFLGLF) traverse the membrane as a helical segment. At 341–362 (VNFRYLYKQRKQHLGPKKRKMK) the chain is on the cytoplasmic side.

Belongs to the very long-chain fatty acids dehydratase HACD family.

It localises to the endoplasmic reticulum membrane. The enzyme catalyses a very-long-chain (3R)-3-hydroxyacyl-CoA = a very-long-chain (2E)-enoyl-CoA + H2O. It catalyses the reaction (3R)-hydroxyhexadecanoyl-CoA = (2E)-hexadecenoyl-CoA + H2O. It functions in the pathway lipid metabolism; fatty acid biosynthesis. Functionally, catalyzes the third of the four reactions of the long-chain fatty acids elongation cycle. This endoplasmic reticulum-bound enzymatic process, allows the addition of two carbons to the chain of long- and very long-chain fatty acids/VLCFAs per cycle. This enzyme catalyzes the dehydration of the 3-hydroxyacyl-CoA intermediate into trans-2,3-enoyl-CoA, within each cycle of fatty acid elongation. Thereby, it participates in the production of VLCFAs of different chain lengths that are involved in multiple biological processes as precursors of membrane lipids and lipid mediators. Involved in Rac1-signaling pathways leading to the modulation of gene expression. This chain is Very-long-chain (3R)-3-hydroxyacyl-CoA dehydratase, found in Gallus gallus (Chicken).